Consider the following 217-residue polypeptide: Large ribosomal subunit protein uL4 (217 aa).

The protein belongs to the universal ribosomal protein uL4 family. In terms of assembly, part of the 50S ribosomal subunit.

Functionally, one of the primary rRNA binding proteins, this protein initially binds near the 5'-end of the 23S rRNA. It is important during the early stages of 50S assembly. It makes multiple contacts with different domains of the 23S rRNA in the assembled 50S subunit and ribosome. Its function is as follows. Forms part of the polypeptide exit tunnel. This chain is Large ribosomal subunit protein uL4, found in Koribacter versatilis (strain Ellin345).